We begin with the raw amino-acid sequence, 110 residues long: Non-specific lipid-transfer protein 4 (110 aa).

The first 17 residues, 1 to 17 (CVVLVMCMVVIAPMAEG), serve as a signal peptide directing secretion. 4 disulfide bridges follow: C21-C68, C31-C45, C46-C91, and C66-C105.

The protein belongs to the plant LTP family.

In terms of biological role, plant non-specific lipid-transfer proteins transfer phospholipids as well as galactolipids across membranes. May play a role in wax or cutin deposition in the cell walls of expanding epidermal cells and certain secretory tissues. The polypeptide is Non-specific lipid-transfer protein 4 (Lens culinaris (Lentil)).